Reading from the N-terminus, the 461-residue chain is Phosphatidate cytidylyltransferase 1 (461 aa).

Positions 1–67 (MLELRHRGSC…IPEIPPSSDR (67 aa)) are disordered. Arg-7 is subject to Omega-N-methylarginine. Positions 20-56 (PHREGEAAGGDHETESTSDKETDIDDRYGDLDSRTDS) are enriched in basic and acidic residues. A phosphoserine mark is found at Ser-35 and Ser-37. A run of 6 helical transmembrane segments spans residues 96 to 116 (MISL…LLVL), 149 to 169 (FLLC…FATF), 183 to 203 (HRFI…LSLV), 230 to 250 (LVIQ…SSVI), 279 to 299 (GFIG…YVLS), and 357 to 377 (IALS…ASGF).

The protein belongs to the CDS family. In terms of assembly, homodimer. Interacts with FOS; this interaction may enhance catalytic activity. The cofactor is Mg(2+). As to expression, expressed in adult tissues such as placenta, brain, small intestine, ovary, testis and prostate. Highly expressed in fetal kidney, lung and brain. Lower level in fetal liver.

The protein resides in the endoplasmic reticulum membrane. The enzyme catalyses a 1,2-diacyl-sn-glycero-3-phosphate + CTP + H(+) = a CDP-1,2-diacyl-sn-glycerol + diphosphate. The catalysed reaction is 1-octadecanoyl-2-(5Z,8Z,11Z,14Z-eicosatetraenoyl)-sn-glycero-3-phosphate + CTP + H(+) = 1-octadecanoyl-2-(5Z,8Z,11Z,14Z-eicosatetraenoyl)-sn-glycero-3-cytidine-5'-diphosphate + diphosphate. It carries out the reaction 1-octadecanoyl-2-(9Z,12Z-octadecadienoyl)-sn-glycero-3-phosphate + CTP + H(+) = 1-octadecanoyl-2-(9Z,12Z-octadecadienoyl)-sn-glycero-3-cytidine-5'-diphosphate + diphosphate. It catalyses the reaction 1-hexadecanoyl-2-(5Z,8Z,11Z,14Z-eicosatetraenoyl)-sn-glycero-3-phosphate + CTP + H(+) = 1-hexadecanoyl-2-(5Z,8Z,11Z,14Z-eicosatetraenoyl)-sn-glycero-3-cytidine-5'-diphosphate + diphosphate. The enzyme catalyses 1,2-di-(5Z,8Z,11Z,14Z)-eicosatetraenoyl-sn-glycero-3-phosphate + CTP + H(+) = 1,2-di-(5Z,8Z,11Z,14Z-eicosatetraenoyl)-sn-glycero-3-cytidine-5'-diphosphate + diphosphate. The catalysed reaction is 1-octadecanoyl-2-(9Z-octadecenoyl)-sn-glycero-3-phosphate + CTP + H(+) = 1-octadecanoyl-2-(9Z-octadecenoyl)-sn-glycero-3-cytidine-5'-diphosphate + diphosphate. It carries out the reaction 1-octadecanoyl-2-(4Z,7Z,10Z,13Z,16Z,19Z-docosahexaenoyl)-sn-glycero-3-phosphate + CTP + H(+) = 1-octadecanoyl-2-(4Z,7Z,10Z,13Z,16Z,19Z-docosahexaenoyl)-sn-glycero-3-cytidine-5'-diphosphate + diphosphate. It catalyses the reaction 1,2-di-(9Z,12Z-octadecadienoyl)-sn-glycero-3-phosphate + CTP + H(+) = 1,2-di-(9Z,12Z-octadecadienoyl)-sn-glycero-3-cytidine-5'-diphosphate + diphosphate. The enzyme catalyses 1,2-di-(9Z-octadecenoyl)-sn-glycero-3-phosphate + CTP + H(+) = 1,2-di-(9Z-octadecenoyl)-sn-glycero-3-cytidine-5'-diphosphate + diphosphate. Its pathway is phospholipid metabolism; CDP-diacylglycerol biosynthesis; CDP-diacylglycerol from sn-glycerol 3-phosphate: step 3/3. Its activity is regulated as follows. Inhibited by its anionic phospholipid end products, with phosphatidylinositol-(4,5)- bisphosphate showing the strongest inhibition. In terms of biological role, catalyzes the conversion of phosphatidic acid (PA) to CDP-diacylglycerol (CDP-DAG), an essential intermediate in the synthesis of phosphatidylglycerol, cardiolipin and phosphatidylinositol. Exhibits almost no acyl chain preference for PA, showing no discrimination for the sn-1/sn-2 acyl chain composition of PAs. Plays an important role in regulating the growth of lipid droplets which are storage organelles at the center of lipid and energy homeostasis. Positively regulates the differentiation and development of adipocytes. The protein is Phosphatidate cytidylyltransferase 1 of Homo sapiens (Human).